A 639-amino-acid chain; its full sequence is CD2-associated protein (639 aa).

Residues 1-59 form the SH3 1; truncated domain; it reads MVDYIVEYDYDAVHDDELTIRVGEIIRNVKKLQEEGWLEGELNGRRGMFPDNFVKEIKR. The interval 1 to 175 is interaction with ANLN and localization to the midbody; the sequence is MVDYIVEYDY…EVTDDGETHE (175 aa). Residue lysine 58 forms a Glycyl lysine isopeptide (Lys-Gly) (interchain with G-Cter in SUMO2) linkage. 3 positions are modified to phosphoserine: serine 67, serine 80, and serine 86. The SH3 2 domain maps to 108–167; that stretch reads TKKRQCKVLFEYIPQNEDELELKVGDIIDINEEVEEGWWSGTLNNKLGLFPSNFVKELEV. Residues 168–177 are compositionally biased toward basic and acidic residues; sequence TDDGETHEAQ. The disordered stretch occupies residues 168–209; it reads TDDGETHEAQDDSETVLAGPTSPIPSLGNVSETASGSVTQPK. Residues 195-207 show a composition bias toward polar residues; sequence GNVSETASGSVTQ. Serine 224 carries the post-translational modification Phosphoserine. Residues 227–256 are disordered; it reads LRTRTSSSETEEKKPEKPLILQSLGPKTQS. In terms of domain architecture, SH3 3 spans 269 to 330; that stretch reads KAKEYCRTLF…PDNFAVQINE (62 aa). The segment at 333-428 is disordered; it reads KDFPKPKKPP…PPPPIAKING (96 aa). 3 consecutive short sequence motifs (SH3-binding) follow at residues 336–352, 378–397, and 410–422; these read PKPK…APKP, KPSK…PPTK, and PKRP…PPPP. Pro residues predominate over residues 341-351; the sequence is PPPPAKAPAPK. The span at 356–379 shows a compositional bias: basic and acidic residues; the sequence is AAEKKYFSLKPEEKDEKSTLEQKP. Residues 385-395 are compositionally biased toward pro residues; it reads PQVPPKKPTPP. Residues serine 458, serine 463, serine 469, serine 510, and serine 514 each carry the phosphoserine modification. A Glycyl lysine isopeptide (Lys-Gly) (interchain with G-Cter in SUMO2) cross-link involves residue lysine 523. Threonine 565 is modified (phosphothreonine). The stretch at 577-638 forms a coiled coil; the sequence is DVKKNSLDEL…IEKLKKAVLS (62 aa). Serine 582 carries the phosphoserine modification.

In terms of assembly, homodimer. Interacts with F-actin, PKD2, NPHS1 and NPHS2. Interacts with WTIP. Interacts with DDN; interaction is direct. Interacts (via SH3 2 domain) with CBL (via phosphorylated C-terminus). Interacts with BCAR1/p130Cas (via SH3 domain). Interacts with MVB12A and ARHGAP17. Interacts with ANLN, CD2 and CBLB. Interacts with PDCD6IP and TSG101. Interacts with RIN3. Interacts directly with RET (inactive) and CBLC; upon RET activation by GDNF suggested to dissociate from RET as CBLC:CD2AP complex. Interacts with CGNL1 and SH3BP1; probably part of a complex at cell junctions. Interacts with CAPZA1. As to quaternary structure, (Microbial infection) Interacts (via SH3 domains) with Chikungunya virus non-structural protein 3 (via C-terminus); this interaction plays a role in initiation of viral replication. Post-translationally, phosphorylated on tyrosine residues; probably by c-Abl, Fyn and c-Src. In terms of tissue distribution, widely expressed in fetal and adult tissues.

The protein localises to the cytoplasm. It is found in the cytoskeleton. Its subcellular location is the cell projection. It localises to the ruffle. The protein resides in the cell junction. Seems to act as an adapter protein between membrane proteins and the actin cytoskeleton. In collaboration with CBLC, modulates the rate of RET turnover and may act as regulatory checkpoint that limits the potency of GDNF on neuronal survival. Controls CBLC function, converting it from an inhibitor to a promoter of RET degradation. May play a role in receptor clustering and cytoskeletal polarity in the junction between T-cell and antigen-presenting cell. May anchor the podocyte slit diaphragm to the actin cytoskeleton in renal glomerolus. Also required for cytokinesis. Plays a role in epithelial cell junctions formation. This Homo sapiens (Human) protein is CD2-associated protein (CD2AP).